Here is a 367-residue protein sequence, read N- to C-terminus: Histidinol-phosphate aminotransferase 1 (367 aa).

Lys229 carries the post-translational modification N6-(pyridoxal phosphate)lysine.

Belongs to the class-II pyridoxal-phosphate-dependent aminotransferase family. Histidinol-phosphate aminotransferase subfamily. As to quaternary structure, homodimer. The cofactor is pyridoxal 5'-phosphate.

The enzyme catalyses L-histidinol phosphate + 2-oxoglutarate = 3-(imidazol-4-yl)-2-oxopropyl phosphate + L-glutamate. It functions in the pathway amino-acid biosynthesis; L-histidine biosynthesis; L-histidine from 5-phospho-alpha-D-ribose 1-diphosphate: step 7/9. The polypeptide is Histidinol-phosphate aminotransferase 1 (hisC1) (Mesorhizobium japonicum (strain LMG 29417 / CECT 9101 / MAFF 303099) (Mesorhizobium loti (strain MAFF 303099))).